Consider the following 908-residue polypeptide: Bifunctional uridylyltransferase/uridylyl-removing enzyme (908 aa).

The segment at M1–R360 is uridylyltransferase. The interval I361–T718 is uridylyl-removing. An HD domain is found at V477–L599. ACT domains are found at residues R719–R801 and I829–R904.

The protein belongs to the GlnD family. Mg(2+) serves as cofactor.

It carries out the reaction [protein-PII]-L-tyrosine + UTP = [protein-PII]-uridylyl-L-tyrosine + diphosphate. It catalyses the reaction [protein-PII]-uridylyl-L-tyrosine + H2O = [protein-PII]-L-tyrosine + UMP + H(+). Uridylyltransferase (UTase) activity is inhibited by glutamine, while glutamine activates uridylyl-removing (UR) activity. Functionally, modifies, by uridylylation and deuridylylation, the PII regulatory proteins (GlnB and homologs), in response to the nitrogen status of the cell that GlnD senses through the glutamine level. Under low glutamine levels, catalyzes the conversion of the PII proteins and UTP to PII-UMP and PPi, while under higher glutamine levels, GlnD hydrolyzes PII-UMP to PII and UMP (deuridylylation). Thus, controls uridylylation state and activity of the PII proteins, and plays an important role in the regulation of nitrogen assimilation and metabolism. This Ruegeria pomeroyi (strain ATCC 700808 / DSM 15171 / DSS-3) (Silicibacter pomeroyi) protein is Bifunctional uridylyltransferase/uridylyl-removing enzyme.